Reading from the N-terminus, the 224-residue chain is UPF0758 protein Hhal_2301 (224 aa).

The MPN domain occupies 102–224 (TLSSPAQTRT…PVSLAERGVL (123 aa)). The Zn(2+) site is built by H173, H175, and D186. Residues 173-186 (HNHPSGITEPSAAD) carry the JAMM motif motif.

Belongs to the UPF0758 family.

This Halorhodospira halophila (strain DSM 244 / SL1) (Ectothiorhodospira halophila (strain DSM 244 / SL1)) protein is UPF0758 protein Hhal_2301.